Consider the following 185-residue polypeptide: Ribosome-recycling factor (185 aa).

It belongs to the RRF family.

It is found in the cytoplasm. Functionally, responsible for the release of ribosomes from messenger RNA at the termination of protein biosynthesis. May increase the efficiency of translation by recycling ribosomes from one round of translation to another. This is Ribosome-recycling factor from Thermosipho melanesiensis (strain DSM 12029 / CIP 104789 / BI429).